The sequence spans 66 residues: UPF0370 protein YpfN (66 aa).

Residues 4–24 (LAKYWWILVIVFLVGVLLNVI) traverse the membrane as a helical segment. Residues 39–66 (KPELPPHRDFNDKWDDDDDWPKKDQPKK) form a disordered region. Basic and acidic residues predominate over residues 42-51 (LPPHRDFNDK).

The protein belongs to the UPF0370 family.

It is found in the cell membrane. This chain is UPF0370 protein YpfN, found in Escherichia coli O139:H28 (strain E24377A / ETEC).